A 361-amino-acid chain; its full sequence is Lipoyl synthase 1, chloroplastic (361 aa).

Residues C87, C92, C98, C124, C128, C131, and S339 each coordinate [4Fe-4S] cluster. The Radical SAM core domain occupies 107–328 (GEGDGIATAT…KEYGESVGFR (222 aa)).

It belongs to the radical SAM superfamily. Lipoyl synthase family. It depends on [4Fe-4S] cluster as a cofactor.

The protein resides in the plastid. It is found in the chloroplast. It carries out the reaction [[Fe-S] cluster scaffold protein carrying a second [4Fe-4S](2+) cluster] + N(6)-octanoyl-L-lysyl-[protein] + 2 oxidized [2Fe-2S]-[ferredoxin] + 2 S-adenosyl-L-methionine + 4 H(+) = [[Fe-S] cluster scaffold protein] + N(6)-[(R)-dihydrolipoyl]-L-lysyl-[protein] + 4 Fe(3+) + 2 hydrogen sulfide + 2 5'-deoxyadenosine + 2 L-methionine + 2 reduced [2Fe-2S]-[ferredoxin]. Its pathway is protein modification; protein lipoylation via endogenous pathway; protein N(6)-(lipoyl)lysine from octanoyl-[acyl-carrier-protein]: step 2/2. Its function is as follows. Catalyzes the radical-mediated insertion of two sulfur atoms into the C-6 and C-8 positions of the octanoyl moiety bound to the lipoyl domains of lipoate-dependent enzymes, thereby converting the octanoylated domains into lipoylated derivatives. This is Lipoyl synthase 1, chloroplastic from Zea mays (Maize).